Here is a 180-residue protein sequence, read N- to C-terminus: Adenine phosphoribosyltransferase (180 aa).

The protein belongs to the purine/pyrimidine phosphoribosyltransferase family. As to quaternary structure, homodimer.

It localises to the cytoplasm. The enzyme catalyses AMP + diphosphate = 5-phospho-alpha-D-ribose 1-diphosphate + adenine. It participates in purine metabolism; AMP biosynthesis via salvage pathway; AMP from adenine: step 1/1. Its function is as follows. Catalyzes a salvage reaction resulting in the formation of AMP, that is energically less costly than de novo synthesis. The sequence is that of Adenine phosphoribosyltransferase from Mycoplasma genitalium (strain ATCC 33530 / DSM 19775 / NCTC 10195 / G37) (Mycoplasmoides genitalium).